Reading from the N-terminus, the 273-residue chain is Ciliary microtubule inner protein 2B (273 aa).

2 disordered regions span residues 59–85 and 123–164; these read TLLPPIQSPRSPVISKGRLPPRRGHER and RHGE…HASP. The segment covering 123–159 has biased composition (basic and acidic residues); it reads RHGEQESHQLPDGAKGEREVEEDQLREAEEPPLKQEL.

The protein belongs to the CIMIP2 family. As to quaternary structure, microtubule inner protein component of sperm flagellar doublet microtubules. As to expression, expressed in airway epithelial cells.

Its subcellular location is the cytoplasm. It localises to the cytoskeleton. The protein resides in the cilium axoneme. The protein localises to the flagellum axoneme. Microtubule inner protein (MIP) part of the dynein-decorated doublet microtubules (DMTs) in cilia axoneme, which is required for motile cilia beating. The chain is Ciliary microtubule inner protein 2B (Cimip2b) from Mus musculus (Mouse).